A 587-amino-acid chain; its full sequence is Aspartate--tRNA ligase (587 aa).

Position 173 (E173) interacts with L-aspartate. The tract at residues Q197–K200 is aspartate. R219 provides a ligand contact to L-aspartate. ATP contacts are provided by residues R219 to E221 and Q228. Residue H446 participates in L-aspartate binding. E480 contacts ATP. R487 serves as a coordination point for L-aspartate. Position 532-535 (G532–R535) interacts with ATP.

Belongs to the class-II aminoacyl-tRNA synthetase family. Type 1 subfamily. In terms of assembly, homodimer.

The protein localises to the cytoplasm. It carries out the reaction tRNA(Asp) + L-aspartate + ATP = L-aspartyl-tRNA(Asp) + AMP + diphosphate. Catalyzes the attachment of L-aspartate to tRNA(Asp) in a two-step reaction: L-aspartate is first activated by ATP to form Asp-AMP and then transferred to the acceptor end of tRNA(Asp). The sequence is that of Aspartate--tRNA ligase from Bacteroides thetaiotaomicron (strain ATCC 29148 / DSM 2079 / JCM 5827 / CCUG 10774 / NCTC 10582 / VPI-5482 / E50).